The chain runs to 34 residues: Photosystem I reaction center subunit XII (34 aa).

Residues 10–32 form a helical membrane-spanning segment; that stretch reads IFIALVVAAHAGVLAVRLCVSLY.

The protein belongs to the PsaM family.

The protein resides in the cellular thylakoid membrane. This chain is Photosystem I reaction center subunit XII, found in Synechococcus sp. (strain WH7803).